A 1393-amino-acid chain; its full sequence is RNA polymerase II-associated protein 1 (1393 aa).

Disordered stretches follow at residues 34–53 (KKGN…LQDH), 61–94 (NLPD…PEER), and 266–295 (SHTQ…EEPL). Residues 64 to 74 (DLPPALVPSPP) show a composition bias toward pro residues. Residue Ser72 is modified to Phosphoserine. Position 321 is a phosphothreonine (Thr321). The interval 496–531 (PSQEDKEDEDEDEECPAGKAKRKSPEEESRPPPDLA) is disordered. Residues 500–510 (DKEDEDEDEEC) show a composition bias toward acidic residues. Residues 518–531 (KSPEEESRPPPDLA) show a composition bias toward basic and acidic residues. Position 1121 is a phosphoserine (Ser1121).

The protein belongs to the RPAP1 family. As to quaternary structure, part of an RNA polymerase II complex that contains POLR2A, POLR2B, POLR2C, POLR2D, POLR2E, POLR2F, POLR2G, POLR2H, POLR2I, POLR2J, POLR2K, POLR2L, RPAP1, FCP1 plus the general transcription factors TFIIB and TFIIF.

Its subcellular location is the nucleus. Its function is as follows. Forms an interface between the RNA polymerase II enzyme and chaperone/scaffolding protein, suggesting that it is required to connect RNA polymerase II to regulators of protein complex formation. Required for interaction of the RNA polymerase II complex with acetylated histone H3. This chain is RNA polymerase II-associated protein 1 (RPAP1), found in Homo sapiens (Human).